Here is a 607-residue protein sequence, read N- to C-terminus: Synaptotagmin-like protein 3 (607 aa).

The RabBD domain occupies 4-123 (EVDLESFKEL…IKTGEWFFEE (120 aa)). Residues 221–279 (VGHTERRSQSDTAVNVTSRKASTPDILKAFHQEDPKHPPDPVLKQDTPPSSPTHSAVFS) form a disordered region. Positions 230–241 (SDTAVNVTSRKA) are enriched in polar residues. The span at 248–259 (KAFHQEDPKHPP) shows a compositional bias: basic and acidic residues. C2 domains are found at residues 305–430 (VTGE…ARWY) and 458–590 (LPAG…LQWH).

In terms of assembly, monomer. Binds NRXN1. Binds RAB27A that has been activated by GTP-binding via its N-terminus. Highly expressed in spleen and lung. Detected at lower levels in heart and testis.

The protein localises to the endomembrane system. Functionally, may act as Rab effector protein and play a role in vesicle trafficking. Binds phospholipids in the presence of calcium ions. This Mus musculus (Mouse) protein is Synaptotagmin-like protein 3 (Sytl3).